The sequence spans 283 residues: Acetylglutamate kinase (283 aa).

Substrate contacts are provided by residues 63 to 64 (GG), Arg85, and Asn179.

This sequence belongs to the acetylglutamate kinase family. ArgB subfamily.

Its subcellular location is the cytoplasm. The catalysed reaction is N-acetyl-L-glutamate + ATP = N-acetyl-L-glutamyl 5-phosphate + ADP. It participates in amino-acid biosynthesis; L-arginine biosynthesis; N(2)-acetyl-L-ornithine from L-glutamate: step 2/4. In terms of biological role, catalyzes the ATP-dependent phosphorylation of N-acetyl-L-glutamate. The protein is Acetylglutamate kinase of Clostridium kluyveri (strain NBRC 12016).